Reading from the N-terminus, the 494-residue chain is Cytochrome c-552 (494 aa).

The N-terminal stretch at 1-31 (MEKKLKSWQGWLLFGGTMVVVFVLGMIAASV) is a signal peptide. His-116 serves as a coordination point for heme c. Cys-144, Cys-147, and Lys-148 together coordinate heme. Heme c-binding residues include Cys-182, Cys-185, His-186, Cys-224, Cys-227, and His-228. Residues Glu-230, Tyr-231, Lys-276, and Gln-278 each contribute to the Ca(2+) site. Tyr-231 contacts substrate. His-279 serves as a coordination point for substrate. Heme c is bound by residues His-290, Cys-297, Cys-300, His-301, His-315, Cys-328, Cys-331, His-332, and His-407.

The protein belongs to the cytochrome c-552 family. Ca(2+) is required as a cofactor. Heme c serves as cofactor.

The protein localises to the periplasm. The enzyme catalyses 6 Fe(III)-[cytochrome c] + NH4(+) + 2 H2O = 6 Fe(II)-[cytochrome c] + nitrite + 8 H(+). The protein operates within nitrogen metabolism; nitrate reduction (assimilation). Functionally, catalyzes the reduction of nitrite to ammonia, consuming six electrons in the process. This is Cytochrome c-552 from Parabacteroides distasonis (strain ATCC 8503 / DSM 20701 / CIP 104284 / JCM 5825 / NCTC 11152).